The chain runs to 496 residues: Glycerol kinase (496 aa).

An ADP-binding site is contributed by T12. ATP is bound by residues T12, T13, and S14. Sn-glycerol 3-phosphate is bound at residue T12. R16 contributes to the ADP binding site. The sn-glycerol 3-phosphate site is built by R82, E83, and Y134. R82, E83, and Y134 together coordinate glycerol. H230 bears the Phosphohistidine; by HPr mark. Sn-glycerol 3-phosphate is bound at residue D244. Residues D244 and Q245 each coordinate glycerol. Residues T266 and G309 each coordinate ADP. T266, G309, Q313, and G410 together coordinate ATP. ADP is bound by residues G410 and N414.

It belongs to the FGGY kinase family. As to quaternary structure, homotetramer and homodimer (in equilibrium). The phosphoenolpyruvate-dependent sugar phosphotransferase system (PTS), including enzyme I, and histidine-containing protein (HPr) are required for the phosphorylation, which leads to the activation of the enzyme.

The catalysed reaction is glycerol + ATP = sn-glycerol 3-phosphate + ADP + H(+). It participates in polyol metabolism; glycerol degradation via glycerol kinase pathway; sn-glycerol 3-phosphate from glycerol: step 1/1. Activated by phosphorylation and inhibited by fructose 1,6-bisphosphate (FBP). In terms of biological role, key enzyme in the regulation of glycerol uptake and metabolism. Catalyzes the phosphorylation of glycerol to yield sn-glycerol 3-phosphate. The protein is Glycerol kinase of Bacillus cereus (strain G9842).